The following is a 244-amino-acid chain: 14-3-3 protein homolog 1 (244 aa).

This sequence belongs to the 14-3-3 family.

The chain is 14-3-3 protein homolog 1 from Echinococcus granulosus (Hydatid tapeworm).